A 296-amino-acid polypeptide reads, in one-letter code: ATP synthase gamma chain (296 aa).

Belongs to the ATPase gamma chain family. In terms of assembly, F-type ATPases have 2 components, CF(1) - the catalytic core - and CF(0) - the membrane proton channel. CF(1) has five subunits: alpha(3), beta(3), gamma(1), delta(1), epsilon(1). CF(0) has three main subunits: a, b and c.

The protein localises to the cell membrane. Functionally, produces ATP from ADP in the presence of a proton gradient across the membrane. The gamma chain is believed to be important in regulating ATPase activity and the flow of protons through the CF(0) complex. The chain is ATP synthase gamma chain from Pseudarthrobacter chlorophenolicus (strain ATCC 700700 / DSM 12829 / CIP 107037 / JCM 12360 / KCTC 9906 / NCIMB 13794 / A6) (Arthrobacter chlorophenolicus).